The primary structure comprises 332 residues: Glycerol-3-phosphate dehydrogenase [NAD(P)+] (332 aa).

The NADPH site is built by serine 10, tryptophan 11, lysine 31, and lysine 105. Residues lysine 105, glycine 136, and serine 138 each coordinate sn-glycerol 3-phosphate. Alanine 140 serves as a coordination point for NADPH. Residues lysine 191, aspartate 244, serine 254, arginine 255, and asparagine 256 each coordinate sn-glycerol 3-phosphate. Lysine 191 serves as the catalytic Proton acceptor. Arginine 255 contributes to the NADPH binding site. Residues valine 279 and glutamate 281 each contribute to the NADPH site.

It belongs to the NAD-dependent glycerol-3-phosphate dehydrogenase family.

The protein localises to the cytoplasm. It catalyses the reaction sn-glycerol 3-phosphate + NAD(+) = dihydroxyacetone phosphate + NADH + H(+). The catalysed reaction is sn-glycerol 3-phosphate + NADP(+) = dihydroxyacetone phosphate + NADPH + H(+). It functions in the pathway membrane lipid metabolism; glycerophospholipid metabolism. Catalyzes the reduction of the glycolytic intermediate dihydroxyacetone phosphate (DHAP) to sn-glycerol 3-phosphate (G3P), the key precursor for phospholipid synthesis. This Anaeromyxobacter sp. (strain K) protein is Glycerol-3-phosphate dehydrogenase [NAD(P)+].